The following is a 168-amino-acid chain: ATP synthase subunit b (168 aa).

A helical transmembrane segment spans residues 9–29 (AIPFGTIAYTLFIFLILLVML).

Belongs to the ATPase B chain family. F-type ATPases have 2 components, F(1) - the catalytic core - and F(0) - the membrane proton channel. F(1) has five subunits: alpha(3), beta(3), gamma(1), delta(1), epsilon(1). F(0) has three main subunits: a(1), b(2) and c(10-14). The alpha and beta chains form an alternating ring which encloses part of the gamma chain. F(1) is attached to F(0) by a central stalk formed by the gamma and epsilon chains, while a peripheral stalk is formed by the delta and b chains.

The protein resides in the cell membrane. F(1)F(0) ATP synthase produces ATP from ADP in the presence of a proton or sodium gradient. F-type ATPases consist of two structural domains, F(1) containing the extramembraneous catalytic core and F(0) containing the membrane proton channel, linked together by a central stalk and a peripheral stalk. During catalysis, ATP synthesis in the catalytic domain of F(1) is coupled via a rotary mechanism of the central stalk subunits to proton translocation. Functionally, component of the F(0) channel, it forms part of the peripheral stalk, linking F(1) to F(0). In Bacillus cereus (strain G9842), this protein is ATP synthase subunit b.